A 155-amino-acid polypeptide reads, in one-letter code: uncharacterized protein (155 aa).

Residues 1–30 (MTYNTNTSLSSYAGLSAFALSVFCILWGTA) form the signal peptide.

This is an uncharacterized protein from Treponema pallidum (strain Nichols).